The sequence spans 1174 residues: K(+) efflux antiporter 2, chloroplastic (1174 aa).

Residues 1 to 57 (MDFASSVQRQSMFHGGADFASYCLPNRMISAKLCPKGLGGTRFWDPMIDSKVRSAIR) constitute a chloroplast transit peptide. The Stromal segment spans residues 58 to 565 (SKRNVSYRSS…MFPQQEVNEE (508 aa)). Residues 119 to 141 (GSDDREVTFSKEEKDTREQDSAP) are disordered. Residues 142–350 (SLEELRDLLN…ALQRAEKTLF (209 aa)) adopt a coiled-coil conformation. Lys-170 carries the post-translational modification N6-acetyllysine; by NSI. A compositionally biased stretch (basic and acidic residues) spans 420–448 (EAEGEAEKSKNVVLTKKQEVQKDLPRESS). Positions 420 to 457 (EAEGEAEKSKNVVLTKKQEVQKDLPRESSSHNGTKTSL) are disordered. Residues 566-586 (EASLLDVLWLLLASVIFVPLF) traverse the membrane as a helical segment. Residues 587-592 (QKIPGG) are Chloroplast intermembrane-facing. The helical transmembrane segment at 593-613 (SPVLGYLAAGILIGPYGLSII) threads the bilayer. Topologically, residues 614–620 (RNVHGTK) are stromal. A helical transmembrane segment spans residues 621-641 (AIAEFGVVFLLFNIGLELSVE). Residues 642–648 (RLSSMKK) are Chloroplast intermembrane-facing. A helical transmembrane segment spans residues 649–669 (YVFGLGSAQVLVTAAVIGLIT). Over 670-678 (HYVAGQAGP) the chain is Stromal. Residues 679 to 699 (AAIVIGNGLALSSTAVVLQVL) traverse the membrane as a helical segment. The Chloroplast intermembrane portion of the chain corresponds to 700-713 (QERGESTSRHGRAT). Residues 714 to 734 (FSVLLFQDLAVVVLLILIPLI) traverse the membrane as a helical segment. The Stromal segment spans residues 735–746 (SPNSSKGGIGFQ). Residues 747-767 (AIAEALGLAAIKAAVAITGII) traverse the membrane as a helical segment. The Chloroplast intermembrane segment spans residues 768–807 (AGGRLLLRPIYKQIAENRNAEIFSANTLLVILGTSLLTAR). A helical transmembrane segment spans residues 808-828 (AGLSMALGAFLAGLLLAETEF). Residues 829-841 (SLQVESDIAPYRG) lie on the Stromal side of the membrane. Residues 842 to 862 (LLLGLFFMTVGMSIDPKLLLA) traverse the membrane as a helical segment. Residues 863–865 (NFP) are Chloroplast intermembrane-facing. The helical transmembrane segment at 866–886 (LIMGTLGLLLVGKTILVVIIG) threads the bilayer. At 887–898 (KLFGISIISAVR) the chain is on the stromal side. A helical membrane pass occupies residues 899–919 (VGLLLAPGGEFAFVAFGEAVN). Topologically, residues 920 to 928 (QGIMTPQLS) are chloroplast intermembrane. The helical transmembrane segment at 929–949 (SLLFLVVGISMALTPWLAAGG) threads the bilayer. At 950–1174 (QLIASRFELQ…NQIIEGTLAI (225 aa)) the chain is on the stromal side. The RCK N-terminal domain occupies 975-1092 (QGHIIICGFG…EKAGATAVVP (118 aa)). The tract at residues 1141-1174 (SLGYGFSRSTSKPKPPSPSETSDDNQIIEGTLAI) is disordered.

Belongs to the monovalent cation:proton antiporter 2 (CPA2) transporter (TC 2.A.37) family. KEA (TC 2.A.37.1) subfamily. Post-translationally, acetylated at Lys-170 by the stromal acetyltransferase enzyme NSI. Detected in leaves, stems and flowers. Expressed in shoots and roots. Mainly localized to leaf veins, hypocotyls, mesophylls and guard cells. Accumulates at high levels in small and dividing plastids (at protein level).

It localises to the plastid. It is found in the chloroplast inner membrane. The protein resides in the plastid inner membrane. It catalyses the reaction K(+)(in) + H(+)(out) = K(+)(out) + H(+)(in). Repressed by sodium ions Na(+). In terms of biological role, electroneutral K(+)/H(+) efflux antiporter modulating monovalent cation and pH homeostasis in plastids, especially during plastid division and thylakoid membrane formation. Transports K(+) and Cs(+) preferentially relative to Na(+) or Li(+). May function in osmotic adjustment. Collaboratively with KEA1, adjusts alkaline stromal pH upon light to dark transitions in plastids. Together with KEA1, critical for chloroplast development, including chloroplast RNA-metabolism (e.g. rRNA maturation, polysome loading and RNA-protein interactions) and plastid gene expression (PGE), ion homeostasis, and photosynthesis. Contributes, during early seedling development, to the regulation of photosynthesis and abscisic acid- (ABA-) mediated primary root growth in a sucrose-dependent manner. Involved in the regulation of reactive oxygen and nitrogen species (ROS and RNS) metabolism. Required in roots for rapid hyperosmotic-induced Ca(2+) responses and for osmo-sensory potentiation in hyperosmotic conditions. May counteract resilience to drought and salt stress, involving photorespiratory pathway and stomata closure. The sequence is that of K(+) efflux antiporter 2, chloroplastic from Arabidopsis thaliana (Mouse-ear cress).